The following is a 240-amino-acid chain: Cilia- and flagella-associated protein 77 (240 aa).

It belongs to the CFAP77 family.

Its subcellular location is the cytoplasm. It is found in the cytoskeleton. The protein localises to the cilium axoneme. It localises to the flagellum axoneme. Its function is as follows. Microtubule inner protein (MIP) part of the dynein-decorated doublet microtubules (DMTs) in cilia axoneme, which is required for motile cilia beating. The sequence is that of Cilia- and flagella-associated protein 77 from Danio rerio (Zebrafish).